A 57-amino-acid chain; its full sequence is uncharacterized protein (57 aa).

A helical membrane pass occupies residues 15–37; the sequence is GLAGLICIGLTISSGFSGSSILI.

The protein localises to the membrane. This is an uncharacterized protein from Dictyostelium discoideum (Social amoeba).